A 214-amino-acid polypeptide reads, in one-letter code: Thymidylate kinase (214 aa).

7 to 14 (GIDGAGKS) is an ATP binding site.

The protein belongs to the thymidylate kinase family.

The enzyme catalyses dTMP + ATP = dTDP + ADP. In terms of biological role, phosphorylation of dTMP to form dTDP in both de novo and salvage pathways of dTTP synthesis. This is Thymidylate kinase from Chlorobaculum tepidum (strain ATCC 49652 / DSM 12025 / NBRC 103806 / TLS) (Chlorobium tepidum).